The sequence spans 215 residues: Adenylate kinase (215 aa).

Gly10–Thr15 lines the ATP pocket. Positions Ser30–Val59 are NMP. AMP-binding positions include Thr31, Arg36, Glu57–Val59, Gly86–Arg89, and Gln93. Residues Gly127–Asp165 are LID. Arg128 is an ATP binding site. Residues Cys131 and Cys134 each contribute to the Zn(2+) site. Thr137–Tyr138 serves as a coordination point for ATP. Residues Cys151 and Cys154 each contribute to the Zn(2+) site. Arg162 and Arg173 together coordinate AMP. An ATP-binding site is contributed by Gln201.

Belongs to the adenylate kinase family. As to quaternary structure, monomer.

The protein resides in the cytoplasm. The enzyme catalyses AMP + ATP = 2 ADP. Its pathway is purine metabolism; AMP biosynthesis via salvage pathway; AMP from ADP: step 1/1. Catalyzes the reversible transfer of the terminal phosphate group between ATP and AMP. Plays an important role in cellular energy homeostasis and in adenine nucleotide metabolism. The protein is Adenylate kinase of Lactococcus lactis subsp. lactis (strain IL1403) (Streptococcus lactis).